The sequence spans 199 residues: Probable nicotinate-nucleotide adenylyltransferase (199 aa).

The protein belongs to the NadD family.

The enzyme catalyses nicotinate beta-D-ribonucleotide + ATP + H(+) = deamido-NAD(+) + diphosphate. It functions in the pathway cofactor biosynthesis; NAD(+) biosynthesis; deamido-NAD(+) from nicotinate D-ribonucleotide: step 1/1. Catalyzes the reversible adenylation of nicotinate mononucleotide (NaMN) to nicotinic acid adenine dinucleotide (NaAD). The sequence is that of Probable nicotinate-nucleotide adenylyltransferase from Rhizobium johnstonii (strain DSM 114642 / LMG 32736 / 3841) (Rhizobium leguminosarum bv. viciae).